A 134-amino-acid chain; its full sequence is MSWQAYVDDHLMCDIEGHEGHRLTAAAIVGHDGSVWAQSATFPQFKPEEMNGIMTDFNEPGHLAPTGLHLGGTKYMVIQGEAGAVIRGKKGSGGITIKKTGQALVFGIYEEPVTPGQCNMVAERLGDYLLEQGL.

A disulfide bridge links Cys-13 with Cys-118. An Involved in PIP2 interaction motif is present at residues 84–100 (AVIRGKKGSGGITIKKT). Residue Thr-114 is modified to Phosphothreonine.

Belongs to the profilin family. Occurs in many kinds of cells as a complex with monomeric actin in a 1:1 ratio. In terms of processing, phosphorylated by MAP kinases.

It is found in the cytoplasm. The protein localises to the cytoskeleton. Functionally, binds to actin and affects the structure of the cytoskeleton. At high concentrations, profilin prevents the polymerization of actin, whereas it enhances it at low concentrations. By binding to PIP2, it inhibits the formation of IP3 and DG. The polypeptide is Profilin-3 (PRO3) (Olea europaea (Common olive)).